The sequence spans 117 residues: Ribonuclease P protein component (117 aa).

Belongs to the RnpA family. As to quaternary structure, consists of a catalytic RNA component (M1 or rnpB) and a protein subunit.

The catalysed reaction is Endonucleolytic cleavage of RNA, removing 5'-extranucleotides from tRNA precursor.. In terms of biological role, RNaseP catalyzes the removal of the 5'-leader sequence from pre-tRNA to produce the mature 5'-terminus. It can also cleave other RNA substrates such as 4.5S RNA. The protein component plays an auxiliary but essential role in vivo by binding to the 5'-leader sequence and broadening the substrate specificity of the ribozyme. This is Ribonuclease P protein component from Staphylococcus aureus (strain MW2).